Reading from the N-terminus, the 240-residue chain is ATP-dependent dethiobiotin synthetase BioD (240 aa).

Residue 15–20 participates in ATP binding; the sequence is EIGKTF. Threonine 19 lines the Mg(2+) pocket. The active site involves lysine 40. ATP contacts are provided by residues aspartate 57, 118-121, and 178-179; these read EGVG and NR. Aspartate 57 and glutamate 118 together coordinate Mg(2+).

Belongs to the dethiobiotin synthetase family. In terms of assembly, homodimer. The cofactor is Mg(2+).

The protein resides in the cytoplasm. It carries out the reaction (7R,8S)-7,8-diammoniononanoate + CO2 + ATP = (4R,5S)-dethiobiotin + ADP + phosphate + 3 H(+). It participates in cofactor biosynthesis; biotin biosynthesis; biotin from 7,8-diaminononanoate: step 1/2. In terms of biological role, catalyzes a mechanistically unusual reaction, the ATP-dependent insertion of CO2 between the N7 and N8 nitrogen atoms of 7,8-diaminopelargonic acid (DAPA, also called 7,8-diammoniononanoate) to form a ureido ring. The chain is ATP-dependent dethiobiotin synthetase BioD from Burkholderia pseudomallei (strain 1106a).